A 367-amino-acid polypeptide reads, in one-letter code: Molybdopterin synthase catalytic subunit (367 aa).

Substrate-binding positions include 101–102 (HR), Lys-117, and 124–126 (KKE). Residues 326-345 (HFTKREPSSMEAAPPKKIRK) are disordered.

This sequence belongs to the MoaE family. MOCS2B subfamily. Heterotetramer; composed of 2 small (Mocs2A) and 2 large (Mocs2B) subunits.

Its subcellular location is the cytoplasm. It catalyses the reaction 2 [molybdopterin-synthase sulfur-carrier protein]-C-terminal-Gly-aminoethanethioate + cyclic pyranopterin phosphate + H2O = molybdopterin + 2 [molybdopterin-synthase sulfur-carrier protein]-C-terminal Gly-Gly + 2 H(+). It participates in cofactor biosynthesis; molybdopterin biosynthesis. Functionally, catalytic subunit of the molybdopterin synthase complex, a complex that catalyzes the conversion of precursor Z into molybdopterin. Acts by mediating the incorporation of 2 sulfur atoms from thiocarboxylated Mocs2A into precursor Z to generate a dithiolene group. The polypeptide is Molybdopterin synthase catalytic subunit (Drosophila sechellia (Fruit fly)).